A 271-amino-acid chain; its full sequence is Thermoregulatory protein LcrF (271 aa).

The region spanning 167 to 265 is the HTH araC/xylS-type domain; that stretch reads ERLQKFMEEN…GCTPSQARLT (99 aa). 2 consecutive DNA-binding regions (H-T-H motif) follow at residues 184 to 205 and 232 to 255; these read SKFA…GTVY and IVDI…RRRF.

In terms of biological role, transcriptional activator of the thermally regulated virulent yopE gene. LcrF activity could be modulated by the interaction with an inducer molecule serving as a temperature messenger. The availability of the messenger would in turn be controlled by a temperature-responsive process serving as a cellular thermometer. In Yersinia pestis, this protein is Thermoregulatory protein LcrF (lcrF).